The primary structure comprises 254 residues: 5-oxoprolinase subunit A (254 aa).

The protein belongs to the LamB/PxpA family. Forms a complex composed of PxpA, PxpB and PxpC.

The enzyme catalyses 5-oxo-L-proline + ATP + 2 H2O = L-glutamate + ADP + phosphate + H(+). Functionally, catalyzes the cleavage of 5-oxoproline to form L-glutamate coupled to the hydrolysis of ATP to ADP and inorganic phosphate. This chain is 5-oxoprolinase subunit A, found in Brevibacillus brevis (strain 47 / JCM 6285 / NBRC 100599).